The chain runs to 569 residues: Undecaprenyl phosphate-alpha-4-amino-4-deoxy-L-arabinose arabinosyl transferase 1 (569 aa).

A run of 12 helical transmembrane segments spans residues 27-47, 98-120, 129-149, 151-171, 194-214, 225-245, 275-295, 311-331, 334-354, 366-386, 396-416, and 420-440; these read GLILAFVMFYLLPLMSHGLWI, LFGVRIASALSTGVSVWLTYLLA, INAASALLYMSFGLIAGQAGY, NLDPQFTLWVNLSMVAVWFAI, LMTKGFLALLLPVLIALPYML, YGLVAVVVCALVSLPWVLAVH, PWWFYLPLLFASTLPWALLLP, AYLALWFLLPLAFFSLSSGKL, YIMPCLLPVALLMGQTVVKWL, GVFNTVLASVALVALLYLQAT, FSLSLAYIVVVGWIIANALQV, and LTLWAMPALGIGLLVALLPAA.

The protein belongs to the glycosyltransferase 83 family.

Its subcellular location is the cell inner membrane. It carries out the reaction 4-amino-4-deoxy-alpha-L-arabinopyranosyl di-trans,octa-cis-undecaprenyl phosphate + lipid IVA = lipid IIA + di-trans,octa-cis-undecaprenyl phosphate.. It functions in the pathway lipopolysaccharide metabolism; 4-amino-4-deoxy-beta-L-arabinose-lipid A biosynthesis. In terms of biological role, catalyzes the transfer of the L-Ara4N moiety of the glycolipid undecaprenyl phosphate-alpha-L-Ara4N to lipid A. The modified arabinose is attached to lipid A and is required for resistance to polymyxin and cationic antimicrobial peptides. The chain is Undecaprenyl phosphate-alpha-4-amino-4-deoxy-L-arabinose arabinosyl transferase 1 from Pseudomonas fluorescens (strain Pf0-1).